Consider the following 423-residue polypeptide: G-protein coupled receptor 83 (423 aa).

The N-terminal stretch at M1–A16 is a signal peptide. Residues E18 to K71 lie on the Extracellular side of the membrane. N-linked (GlcNAc...) asparagine glycans are attached at residues N37 and N46. Residues A72–V92 form a helical membrane-spanning segment. The Cytoplasmic portion of the chain corresponds to C93–S107. The helical transmembrane segment at L108–L129 threads the bilayer. At V130–H145 the chain is on the extracellular side. N-linked (GlcNAc...) asparagine glycosylation is present at N134. C144 and C224 are disulfide-bonded. Residues V146–V167 traverse the membrane as a helical segment. Residues D168–G186 lie on the Cytoplasmic side of the membrane. Residues V187–Q208 traverse the membrane as a helical segment. Topologically, residues K209–Y238 are extracellular. Residues L239 to A260 traverse the membrane as a helical segment. Over R261–M293 the chain is Cytoplasmic. A helical transmembrane segment spans residues L294–L315. The Extracellular portion of the chain corresponds to S316 to Y327. Residues F328–L348 traverse the membrane as a helical segment. At N349 to S423 the chain is on the cytoplasmic side. A compositionally biased stretch (polar residues) spans P402–S414. A disordered region spans residues P402–S423.

This sequence belongs to the G-protein coupled receptor 1 family. As to expression, highly expressed in the brain and spinal cord, and found in lower concentrations in the thymus and other tissues.

It is found in the cell membrane. Its function is as follows. G-protein coupled receptor for PEN, a neuropeptide produced from the precursor protein, proSAAS (encoded by PCSK1N). Acts through a G(i)- and G(q)-alpha-alpha-mediated pathway in response to PEN. Plays a role in food intake and body weight regulation. May contribute to the regulation of anxiety-related behaviors. In Homo sapiens (Human), this protein is G-protein coupled receptor 83.